The following is a 346-amino-acid chain: Protein RecA (346 aa).

67 to 74 (GPESSGKT) contacts ATP.

It belongs to the RecA family.

Its subcellular location is the cytoplasm. In terms of biological role, can catalyze the hydrolysis of ATP in the presence of single-stranded DNA, the ATP-dependent uptake of single-stranded DNA by duplex DNA, and the ATP-dependent hybridization of homologous single-stranded DNAs. It interacts with LexA causing its activation and leading to its autocatalytic cleavage. The chain is Protein RecA from Mycobacterium ulcerans (strain Agy99).